The primary structure comprises 141 residues: Cystatin-SA (141 aa).

A signal peptide spans 1-20 (MAWPLCTLLLLLATQAVALA). The short motif at 76–80 (QIVGG) is the Secondary area of contact element. Disulfide bonds link Cys94/Cys104 and Cys118/Cys138.

As to expression, expressed in submandibular and sublingual saliva but not in parotid saliva (at protein level). Expressed in submandibular gland and parotid gland.

The protein resides in the secreted. Thiol protease inhibitor. This Homo sapiens (Human) protein is Cystatin-SA (CST2).